We begin with the raw amino-acid sequence, 337 residues long: Putative olfactory receptor 1F12P (337 aa).

The Extracellular segment spans residues 1–25; that stretch reads MEGKNQTNISEFLLLGFSSWQQQQV. N-linked (GlcNAc...) asparagine glycans are attached at residues Asn5 and Asn8. Residues 26-49 traverse the membrane as a helical segment; the sequence is LLFALFLCLYLTGLFGNLLILLAI. Topologically, residues 50–57 are cytoplasmic; the sequence is GSDHCLHT. A helical membrane pass occupies residues 58–79; it reads PMYFFLANLSLVDLCLPSATVP. At 80 to 100 the chain is on the extracellular side; that stretch reads KMLLNIQTQTQTISYPGCLAQ. A disulfide bond links Cys97 and Cys189. Residues 101-120 form a helical membrane-spanning segment; sequence MYFCMMFANMDNFLLTVMAY. At 121–139 the chain is on the cytoplasmic side; the sequence is DRYVAICHPLHYSTIMALR. Residues 140–158 form a helical membrane-spanning segment; that stretch reads LCASLVAAPWVIAILNPLL. Over 159-196 the chain is Extracellular; it reads HTLMMAHLHFCSDNVIHHFFCDINSLLPLSCSDTSLNQ. A helical transmembrane segment spans residues 197–219; the sequence is LSVLATVGLIFVVPSVCILVSYI. Over 220–236 the chain is Cytoplasmic; it reads LIVSAVMKVPSAQGKLK. The helical transmembrane segment at 237 to 259 threads the bilayer; the sequence is AFSTCGSHLALVILFYGAITGVY. Residues 260-272 lie on the Extracellular side of the membrane; it reads MSPLSNHSTEKDS. Asn265 carries an N-linked (GlcNAc...) asparagine glycan. A helical transmembrane segment spans residues 273-292; sequence AASVIFMVVAPVLNPFIYSL. The Cytoplasmic portion of the chain corresponds to 293–337; the sequence is RNNELKGTLKKTLSRPGAVAHACNPSTLGGRGGWIMRSGDRDHPG.

Belongs to the G-protein coupled receptor 1 family.

It is found in the cell membrane. Odorant receptor. The sequence is that of Putative olfactory receptor 1F12P from Homo sapiens (Human).